Consider the following 671-residue polypeptide: BLOC-3 complex member HPS4 (671 aa).

Residues 269 to 286 (LQGSSVQYPPWDQSSPTQ) show a composition bias toward polar residues. Disordered stretches follow at residues 269–291 (LQGS…EDAW) and 417–497 (LADL…PSGR). Over residues 467–477 (SALPRSSRSPD) the composition is skewed to low complexity.

Component of the biogenesis of lysosome-related organelles complex-3 (or BLOC-3), a heterodimer of HPS1 and HPS4. HPS4 and the BLOC-3 complex interact with the GTP-bound form of RAB9B but not with the GDP-bound form of RAB9B. HPS4 and the BLOC-3 complex interact with the GTP-bound form of RAB9A but not with the GDP-bound form of RAB9A. HPS4 does not interact RAB4A and RAB7A. Highly expressed in heart, brain, liver and testis. Expressed at lower level in skeletal muscle.

Its function is as follows. Component of the BLOC-3 complex, a complex that acts as a guanine exchange factor (GEF) for RAB32 and RAB38, promotes the exchange of GDP to GTP, converting them from an inactive GDP-bound form into an active GTP-bound form. The BLOC-3 complex plays an important role in the control of melanin production and melanosome biogenesis and promotes the membrane localization of RAB32 and RAB38. The chain is BLOC-3 complex member HPS4 (Hps4) from Mus musculus (Mouse).